The following is a 373-amino-acid chain: Mannitol-1-phosphate 5-dehydrogenase (373 aa).

Position 3–14 (alanine 3–glycine 14) interacts with NAD(+).

The protein belongs to the mannitol dehydrogenase family.

It catalyses the reaction D-mannitol 1-phosphate + NAD(+) = beta-D-fructose 6-phosphate + NADH + H(+). This chain is Mannitol-1-phosphate 5-dehydrogenase, found in Bacillus velezensis (strain DSM 23117 / BGSC 10A6 / LMG 26770 / FZB42) (Bacillus amyloliquefaciens subsp. plantarum).